A 609-amino-acid polypeptide reads, in one-letter code: WD repeat-containing protein 1 (609 aa).

13 WD repeats span residues 6–47, 50–89, 95–137, 140–178, 182–220, 226–265, 272–308, 313–353, 360–410, 434–476, 482–520, 525–563, and 568–606; these read EIKK…IRNI, PAIADIYTEHAHQVVVAKYAPSGFYIASGDVSGKLRIWDT, LLKY…LWDS, SVGEITGHNKVINSVDIKQTRPYRLATGSDDNCAAFFEG, KFKFTLSDHTRFVNCVRFSPDGNRFATASADGQIFIYDG, VCALGGGKAHDGGIYAISWSPDSSQLLSASGDKTAKIWDV, STFNMGSNVLDQQLGCLWQKDHLLSLSLSGYINYLDK, KPLR…YWDS, GFSG…KMDV, MKDK…LYSI, KSDDKTLEAKGPVTDLAYSHDGAFLAVCDANKVVTVFSV, VEHNVFYGHHAKVVCIAWSPDNEHFASGGMDMMVYVWTV, and TRIKIPDAHRLHHVSGLAWLDEHTLVTTSHDASVKEWSI.

It belongs to the WD repeat AIP1 family.

It localises to the cytoplasm. It is found in the cytoskeleton. In terms of biological role, induces disassembly of actin filaments in conjunction with ADF/cofilin family proteins. Enhances cofilin-mediated actin severing. The protein is WD repeat-containing protein 1 (WDR1) of Gallus gallus (Chicken).